The following is a 631-amino-acid chain: ATP-dependent protease PrkA (631 aa).

T217 carries the phosphothreonine modification. S219 carries the phosphoserine modification.

The protein belongs to the PrkA family. Phosphorylated by PrkC on two sites, Thr-217 and Ser-219, with the threonine being the major site of modification.

It is found in the forespore. The protein localises to the spore coat. The enzyme catalyses Hydrolysis of proteins in presence of ATP.. Its activity is regulated as follows. Hydrolase activity is regulated by phosphorylation by the Ser/Thr kinase PrkC, probably allowing fine control of sporulation. Phosphorylation by PrkC does not prevent ATP fixation but it inhibits specifically PrkA protease activity and down-regulates the sporulation processes. Hydrolase activity is inhibited by a protease inhibitor, phenylmethylsulfonyl fluoride (PMSF). Potential kinase activity requires the presence of MgCl(2) and is inhibited in the presence of MnCl(2). In terms of biological role, ATP-dependent protease that regulates sporulation. Is able to bind and hydrolyze ATP. This ATP-dependent protease activity is necessary for efficient sporulation of B.subtilis. In vitro, can hydrolyze alpha-casein, an exogenous substrate of Lon proteases, in an ATP-dependent manner. PrkA also modulates sporulation by negatively regulating the transcriptional regulator Hpr/ScoC to induce the expression of sigK. The control of sporulation mediated via the Hpr/ScoC regulator is probably indirect. PrkA was originally thought to be a protein kinase, as it has been shown to phosphorylate in vitro an unidentified 60 kDa protein from B.subtilis crude extracts at a serine residue. However, Zhang et al. did not observe autophosphorylation or kinase activity for this protein, suggesting that it may have lost its kinase activity during evolution or may be a pseudokinase. This chain is ATP-dependent protease PrkA, found in Bacillus subtilis (strain 168).